Here is a 186-residue protein sequence, read N- to C-terminus: Ribosome-recycling factor (186 aa).

The protein belongs to the RRF family.

The protein resides in the cytoplasm. Its function is as follows. Responsible for the release of ribosomes from messenger RNA at the termination of protein biosynthesis. May increase the efficiency of translation by recycling ribosomes from one round of translation to another. In Burkholderia thailandensis (strain ATCC 700388 / DSM 13276 / CCUG 48851 / CIP 106301 / E264), this protein is Ribosome-recycling factor.